A 549-amino-acid polypeptide reads, in one-letter code: Probable protein kinase UbiB (549 aa).

Positions 123 to 501 (DFNETPLASA…QQQAHKSNYL (379 aa)) constitute a Protein kinase domain. Residues 129–137 (LASASISQV) and K152 each bind ATP. D287 (proton acceptor) is an active-site residue. 2 helical membrane-spanning segments follow: residues 498-518 (SNYL…LFNQ) and 520-540 (ATLL…IIGW).

This sequence belongs to the ABC1 family. UbiB subfamily.

It localises to the cell inner membrane. The protein operates within cofactor biosynthesis; ubiquinone biosynthesis [regulation]. Functionally, is probably a protein kinase regulator of UbiI activity which is involved in aerobic coenzyme Q (ubiquinone) biosynthesis. The chain is Probable protein kinase UbiB from Shewanella oneidensis (strain ATCC 700550 / JCM 31522 / CIP 106686 / LMG 19005 / NCIMB 14063 / MR-1).